We begin with the raw amino-acid sequence, 464 residues long: GTPase Der (464 aa).

EngA-type G domains are found at residues 5-169 (PTIA…KQKG) and 190-368 (IKVA…RESH). Residues 11-18 (GRPNVGKS), 58-62 (DTGGI), 121-124 (NKAD), 196-203 (GRPNAGKS), 243-247 (DTAGM), and 308-311 (NKFD) each bind GTP. The region spanning 369–461 (NLPTTGQLNR…PVIFSARSRV (93 aa)) is the KH-like domain.

It belongs to the TRAFAC class TrmE-Era-EngA-EngB-Septin-like GTPase superfamily. EngA (Der) GTPase family. In terms of assembly, associates with the 50S ribosomal subunit.

Functionally, GTPase that plays an essential role in the late steps of ribosome biogenesis. The polypeptide is GTPase Der (Akkermansia muciniphila (strain ATCC BAA-835 / DSM 22959 / JCM 33894 / BCRC 81048 / CCUG 64013 / CIP 107961 / Muc)).